The chain runs to 244 residues: Phosphoadenosine 5'-phosphosulfate reductase (244 aa).

The active-site Nucleophile; cysteine thiosulfonate intermediate is the cysteine 239.

It belongs to the PAPS reductase family. CysH subfamily.

The protein resides in the cytoplasm. The enzyme catalyses [thioredoxin]-disulfide + sulfite + adenosine 3',5'-bisphosphate + 2 H(+) = [thioredoxin]-dithiol + 3'-phosphoadenylyl sulfate. It participates in sulfur metabolism; hydrogen sulfide biosynthesis; sulfite from sulfate: step 3/3. Catalyzes the formation of sulfite from phosphoadenosine 5'-phosphosulfate (PAPS) using thioredoxin as an electron donor. The chain is Phosphoadenosine 5'-phosphosulfate reductase from Escherichia coli (strain K12 / MC4100 / BW2952).